The chain runs to 322 residues: Peptidase 1 (322 aa).

The signal sequence occupies residues 1-18 (MKFVLAIASLLVLSVVYA). Positions 19-99 (YPSEIRTFEE…LKKEFDLDAG (81 aa)) are excised as a propeptide. Cysteine 131 and cysteine 171 form a disulfide bridge. Cysteine 134 is a catalytic residue. The N-linked (GlcNAc...) asparagine glycan is linked to asparagine 152. Active-site residues include histidine 270 and asparagine 290.

Belongs to the peptidase C1 family. Expressed in the gut.

The protein localises to the secreted. It carries out the reaction Broad endopeptidase specificity.. Probable thiol protease. This chain is Peptidase 1, found in Psoroptes ovis (Sheep scab mite).